The chain runs to 168 residues: Sperm acrosome-associated protein 9 (168 aa).

Microtubule inner protein component of sperm flagellar doublet microtubules. Interacts with CABP1 and CALR. Interacts with INCA1. Interacts with microtubules. As to expression, testis-specific. Expressed in round spermatids.

It localises to the cytoplasm. It is found in the cytoplasmic vesicle. Its subcellular location is the secretory vesicle. The protein resides in the acrosome. The protein localises to the cytoskeleton. It localises to the cilium basal body. It is found in the flagellum axoneme. Its subcellular location is the cilium axoneme. The protein resides in the nucleus. Functionally, microtubule inner protein (MIP) part of the dynein-decorated doublet microtubules (DMTs) of multiciliated respiratory cells and the distal singlet microtubules of monoflagellated spermatozoa. Forms an extensive interaction network cross-linking the lumen of axonemal doublet microtubules. The chain is Sperm acrosome-associated protein 9 (Spaca9) from Rattus norvegicus (Rat).